Here is a 559-residue protein sequence, read N- to C-terminus: CCR4-NOT transcription complex subunit 6-like (559 aa).

The interval 1 to 148 (MPKEKYDPPD…LYQEPDGTRK (148 aa)) is required for interaction with cnot1, cnot3 and cnot7. The interval 1 to 550 (MPKEKYDPPD…NGLHLPVHST (550 aa)) is nuclease domain. 4 LRR repeats span residues 52–73 (HLTALHINNNNLSRIPPEIAKL), 75–96 (HLVYLNLSSNKLRSLPAELGNM), 98–120 (TLRELLLNNNCLRVLPYELGRLF), and 121–143 (QLQTLGLKGNPLSQDILNLYQEP). Glu-235 serves as a coordination point for Mg(2+). Residues Glu-235, Glu-271, His-353, and Pro-358 each contribute to the substrate site. Asp-405 contacts Mg(2+). Asp-405 acts as the Proton donor/acceptor in catalysis. Substrate is bound by residues Asn-407, Asn-474, and Phe-479.

It belongs to the CCR4/nocturin family. Component of the CCR4-NOT complex. Mg(2+) serves as cofactor.

It localises to the cytoplasm. The protein localises to the nucleus. The catalysed reaction is Exonucleolytic cleavage of poly(A) to 5'-AMP.. In terms of biological role, poly(A) nuclease with 3'-5' RNase activity. Catalytic component of the CCR4-NOT complex which is one of the major cellular mRNA deadenylases and is linked to various cellular processes including bulk mRNA degradation, miRNA-mediated repression, translational repression during translational initiation and general transcription regulation. Additional complex functions may be a consequence of its influence on mRNA expression. This is CCR4-NOT transcription complex subunit 6-like (cnot6l) from Danio rerio (Zebrafish).